The primary structure comprises 132 residues: Fumarate reductase subunit C (132 aa).

A run of 3 helical transmembrane segments spans residues 30-50 (ATSVFAVWFCIVLLYGVLCFA), 70-90 (IVVFLNIITLIATLYHTVTYF), and 110-130 (VVRNALWAVTALVSVIALVLV).

It belongs to the FrdC family. In terms of assembly, part of an enzyme complex containing four subunits: a flavoprotein (FrdA), an iron-sulfur protein (FrdB), and two hydrophobic anchor proteins (FrdC and FrdD).

The protein localises to the cell inner membrane. In terms of biological role, anchors the catalytic components of the fumarate reductase complex to the cell membrane, binds quinones. The protein is Fumarate reductase subunit C of Haemophilus influenzae (strain ATCC 51907 / DSM 11121 / KW20 / Rd).